A 94-amino-acid chain; its full sequence is Small ribosomal subunit protein bS18 (94 aa).

This sequence belongs to the bacterial ribosomal protein bS18 family. As to quaternary structure, part of the 30S ribosomal subunit. Forms a tight heterodimer with protein bS6.

Its function is as follows. Binds as a heterodimer with protein bS6 to the central domain of the 16S rRNA, where it helps stabilize the platform of the 30S subunit. The protein is Small ribosomal subunit protein bS18 of Rickettsia bellii (strain OSU 85-389).